Here is a 334-residue protein sequence, read N- to C-terminus: Holliday junction branch migration complex subunit RuvB (334 aa).

The segment at 1 to 182 (MDKRMVDQEF…FGVHLRLEYY (182 aa)) is large ATPase domain (RuvB-L). ATP contacts are provided by residues L21, R22, G63, K66, T67, T68, 129-131 (EDF), R172, Y182, and R219. Residue T67 participates in Mg(2+) binding. The small ATPAse domain (RuvB-S) stretch occupies residues 183 to 253 (NENDLKEIIT…TTKRALQLLQ (71 aa)). The interval 256-334 (QHGLDYIDHK…HFNTTNEKRE (79 aa)) is head domain (RuvB-H). Residues R292, R311, and R316 each contribute to the DNA site.

It belongs to the RuvB family. Homohexamer. Forms an RuvA(8)-RuvB(12)-Holliday junction (HJ) complex. HJ DNA is sandwiched between 2 RuvA tetramers; dsDNA enters through RuvA and exits via RuvB. An RuvB hexamer assembles on each DNA strand where it exits the tetramer. Each RuvB hexamer is contacted by two RuvA subunits (via domain III) on 2 adjacent RuvB subunits; this complex drives branch migration. In the full resolvosome a probable DNA-RuvA(4)-RuvB(12)-RuvC(2) complex forms which resolves the HJ.

It localises to the cytoplasm. The enzyme catalyses ATP + H2O = ADP + phosphate + H(+). Its function is as follows. The RuvA-RuvB-RuvC complex processes Holliday junction (HJ) DNA during genetic recombination and DNA repair, while the RuvA-RuvB complex plays an important role in the rescue of blocked DNA replication forks via replication fork reversal (RFR). RuvA specifically binds to HJ cruciform DNA, conferring on it an open structure. The RuvB hexamer acts as an ATP-dependent pump, pulling dsDNA into and through the RuvAB complex. RuvB forms 2 homohexamers on either side of HJ DNA bound by 1 or 2 RuvA tetramers; 4 subunits per hexamer contact DNA at a time. Coordinated motions by a converter formed by DNA-disengaged RuvB subunits stimulates ATP hydrolysis and nucleotide exchange. Immobilization of the converter enables RuvB to convert the ATP-contained energy into a lever motion, pulling 2 nucleotides of DNA out of the RuvA tetramer per ATP hydrolyzed, thus driving DNA branch migration. The RuvB motors rotate together with the DNA substrate, which together with the progressing nucleotide cycle form the mechanistic basis for DNA recombination by continuous HJ branch migration. Branch migration allows RuvC to scan DNA until it finds its consensus sequence, where it cleaves and resolves cruciform DNA. The sequence is that of Holliday junction branch migration complex subunit RuvB from Staphylococcus epidermidis (strain ATCC 35984 / DSM 28319 / BCRC 17069 / CCUG 31568 / BM 3577 / RP62A).